The sequence spans 425 residues: Histidine--tRNA ligase (425 aa).

It belongs to the class-II aminoacyl-tRNA synthetase family. In terms of assembly, homodimer.

Its subcellular location is the cytoplasm. The catalysed reaction is tRNA(His) + L-histidine + ATP = L-histidyl-tRNA(His) + AMP + diphosphate + H(+). The protein is Histidine--tRNA ligase of Pelotomaculum thermopropionicum (strain DSM 13744 / JCM 10971 / SI).